A 580-amino-acid chain; its full sequence is Acyl-coenzyme A synthetase ACSM4, mitochondrial (580 aa).

The transit peptide at 1–22 directs the protein to the mitochondrion; that stretch reads MKIFFRYQTFRFIWLTKPPGRR. ATP is bound by residues 229–237, 368–373, D455, R470, and K566; these read TSGTTGFPK and EGYGQT.

Belongs to the ATP-dependent AMP-binding enzyme family. The cofactor is Mg(2+). It depends on Mn(2+) as a cofactor.

It localises to the mitochondrion. The catalysed reaction is a medium-chain fatty acid + ATP + CoA = a medium-chain fatty acyl-CoA + AMP + diphosphate. It catalyses the reaction hexanoate + ATP + CoA = hexanoyl-CoA + AMP + diphosphate. It carries out the reaction octanoate + ATP + CoA = octanoyl-CoA + AMP + diphosphate. The enzyme catalyses decanoate + ATP + CoA = decanoyl-CoA + AMP + diphosphate. The catalysed reaction is dodecanoate + ATP + CoA = dodecanoyl-CoA + AMP + diphosphate. Functionally, catalyzes the activation of fatty acids by CoA to produce an acyl-CoA, the first step in fatty acid metabolism. Capable of activating medium-chain fatty acids with a preference for C6-12 fatty acids. The chain is Acyl-coenzyme A synthetase ACSM4, mitochondrial (ACSM4) from Homo sapiens (Human).